The chain runs to 406 residues: Phosphopentomutase (406 aa).

Mn(2+) is bound by residues Asp-10, Asp-305, His-310, Asp-346, His-347, and His-358.

This sequence belongs to the phosphopentomutase family. Mn(2+) serves as cofactor.

The protein resides in the cytoplasm. The catalysed reaction is 2-deoxy-alpha-D-ribose 1-phosphate = 2-deoxy-D-ribose 5-phosphate. The enzyme catalyses alpha-D-ribose 1-phosphate = D-ribose 5-phosphate. It functions in the pathway carbohydrate degradation; 2-deoxy-D-ribose 1-phosphate degradation; D-glyceraldehyde 3-phosphate and acetaldehyde from 2-deoxy-alpha-D-ribose 1-phosphate: step 1/2. Functionally, isomerase that catalyzes the conversion of deoxy-ribose 1-phosphate (dRib-1-P) and ribose 1-phosphate (Rib-1-P) to deoxy-ribose 5-phosphate (dRib-5-P) and ribose 5-phosphate (Rib-5-P), respectively. The protein is Phosphopentomutase of Vibrio vulnificus (strain CMCP6).